Here is a 260-residue protein sequence, read N- to C-terminus: Fructose import ATP-binding protein FrcA (260 aa).

Positions 7-251 (LTARGLVKRY…DAVAFMTGAK (245 aa)) constitute an ABC transporter domain. 39-46 (GDNGAGKS) provides a ligand contact to ATP.

It belongs to the ABC transporter superfamily. The complex is composed of two ATP-binding proteins (FrcA), two transmembrane proteins (FrcC) and a solute-binding protein (FrcB).

The protein localises to the cell inner membrane. It carries out the reaction D-fructose(out) + ATP + H2O = D-fructose(in) + ADP + phosphate + H(+). Part of the high-affinity ABC transporter complex FrcBCA involved in fructose uptake. Is also a high-affinity transporter for ribose and mannose. Responsible for energy coupling to the transport system. This Rhizobium meliloti (Ensifer meliloti) protein is Fructose import ATP-binding protein FrcA.